Reading from the N-terminus, the 640-residue chain is Protein UL35 (640 aa).

Disordered regions lie at residues glutamate 353–alanine 373, alanine 500–arginine 571, and alanine 586–leucine 640. Acidic residues predominate over residues glycine 358–aspartate 367. Residues alanine 500 to alanine 562 are compositionally biased toward low complexity. The span at serine 588 to serine 598 shows a compositional bias: basic residues. Over residues aspartate 631–leucine 640 the composition is skewed to basic and acidic residues.

Belongs to the herpesviridae pp85 family. In terms of assembly, interacts with UL82. Interacts with isoform UL35A. Interacts with host UBP7; this interaction significantly inhibits the ability of USP7 to form nuclear bodies. Interacts with host DCAF1 (via C-terminus). Interacts with host SNX5; this interaction allows proper gB localization during viral assembly. Interacts with host TBK1; this interaction prevents type I interferon production. Interacts with UL82. Interacts with isoform UL35. Interacts with host UBP7; this interaction significantly inhibits the ability of USP7 to form nuclear bodies. Interacts with host SNX5; this interaction allows proper gB localization during viral assembly.

Its subcellular location is the virion tegument. It is found in the host nucleus. The protein resides in the host cytoplasm. Functionally, plays important role in immediate-early gene expression through interaction with UL82. Forms nuclear bodies in host nucleus, independently of PML. In turn, UL35 nuclear bodies associate with and remodel PML bodies. Through interaction with host DCAF1, causes cells to accumulate in the G2 phase of the cell cycle by inducing a DNA damage response. Regulates viral assembly by controlling the localization of the essential gB through regulation of a retrograde transport pathway. This modulation occurs via binding and inhibition of host sorting nexin 5/SNX5. Also plays a role in the inhibition of pattern recognition receptor-mediated type I interferon signaling at the level of TBK1. Its function is as follows. Promotes cytoplasmic UL82 accumulation and inhibits UL35-containing nuclear bodies formation. Regulates viral assembly by controlling the localization of the essential gB through regulation of a retrograde transport pathway. This modulation occurs via binding and inhibition of host sorting nexin 5/SNX5. In Homo sapiens (Human), this protein is Protein UL35 (UL35).